Here is a 132-residue protein sequence, read N- to C-terminus: MGRTWCGMWRRRRPGRRSAVPRWPHLSSQSGVEPPDRWTGTPGWPSRDQEAPGSMMPPAAAQPSAHGALVPPATAHEPVDHPALHWLACCCCLSLPGQLPLAIRLGWDLDLEAGPSSGKLCPRARRWQPLPS.

The interval 17–75 is disordered; that stretch reads RSAVPRWPHLSSQSGVEPPDRWTGTPGWPSRDQEAPGSMMPPAAAQPSAHGALVPPATA. A compositionally biased stretch (low complexity) spans 51–65; sequence APGSMMPPAAAQPSA.

In terms of tissue distribution, expressed exclusively in heart.

It localises to the cytoplasm. This is an uncharacterized protein from Homo sapiens (Human).